A 376-amino-acid polypeptide reads, in one-letter code: Chaperone protein DnaJ (376 aa).

Residues 5 to 70 (DYYETLGVQK…EKRAAYDQYG (66 aa)) form the J domain. Residues 133 to 211 (GTTKDIKINT…CHGDGRVHKK (79 aa)) form a CR-type zinc finger. Positions 146, 149, 163, 166, 185, 188, 199, and 202 each coordinate Zn(2+). CXXCXGXG motif repeat units lie at residues 146 to 153 (CDHCDGSG), 163 to 170 (CPTCHGHG), 185 to 192 (CPTCQGSG), and 199 to 206 (CKHCHGDG).

This sequence belongs to the DnaJ family. Homodimer. It depends on Zn(2+) as a cofactor.

The protein resides in the cytoplasm. Its function is as follows. Participates actively in the response to hyperosmotic and heat shock by preventing the aggregation of stress-denatured proteins and by disaggregating proteins, also in an autonomous, DnaK-independent fashion. Unfolded proteins bind initially to DnaJ; upon interaction with the DnaJ-bound protein, DnaK hydrolyzes its bound ATP, resulting in the formation of a stable complex. GrpE releases ADP from DnaK; ATP binding to DnaK triggers the release of the substrate protein, thus completing the reaction cycle. Several rounds of ATP-dependent interactions between DnaJ, DnaK and GrpE are required for fully efficient folding. Also involved, together with DnaK and GrpE, in the DNA replication of plasmids through activation of initiation proteins. The protein is Chaperone protein DnaJ of Mannheimia succiniciproducens (strain KCTC 0769BP / MBEL55E).